Consider the following 315-residue polypeptide: Homoserine kinase (315 aa).

Pro97–Thr107 lines the ATP pocket.

The protein belongs to the GHMP kinase family. Homoserine kinase subfamily.

The protein resides in the cytoplasm. The catalysed reaction is L-homoserine + ATP = O-phospho-L-homoserine + ADP + H(+). The protein operates within amino-acid biosynthesis; L-threonine biosynthesis; L-threonine from L-aspartate: step 4/5. Functionally, catalyzes the ATP-dependent phosphorylation of L-homoserine to L-homoserine phosphate. The chain is Homoserine kinase from Prochlorococcus marinus (strain NATL2A).